Consider the following 332-residue polypeptide: Cell growth regulator with RING finger domain protein 1 (332 aa).

The RING-type zinc-finger motif lies at 274–309; the sequence is CVVCQNGGVNWVLLPCRHACLCDSCVCYFKQCPMCR.

Highly expressed in testis, lower levels of expression is seen in skeletal muscle, liver, lung and brain.

The protein resides in the nucleus. It is found in the endoplasmic reticulum. Its function is as follows. Able to inhibit growth in several cell lines. This Rattus norvegicus (Rat) protein is Cell growth regulator with RING finger domain protein 1 (Cgrrf1).